The following is a 98-amino-acid chain: Cystatin-B (98 aa).

Residue M1 is modified to N-acetylmethionine. A Secondary area of contact motif is present at residues 46 to 50 (QLVAG).

Belongs to the cystatin family. As to quaternary structure, able to form dimers stabilized by noncovalent forces.

The protein localises to the cytoplasm. In terms of biological role, this is an intracellular thiol proteinase inhibitor. This chain is Cystatin-B (CSTB), found in Bos taurus (Bovine).